Here is a 280-residue protein sequence, read N- to C-terminus: Bis(5'-nucleosyl)-tetraphosphatase, symmetrical (280 aa).

This sequence belongs to the Ap4A hydrolase family.

The enzyme catalyses P(1),P(4)-bis(5'-adenosyl) tetraphosphate + H2O = 2 ADP + 2 H(+). Functionally, hydrolyzes diadenosine 5',5'''-P1,P4-tetraphosphate to yield ADP. This chain is Bis(5'-nucleosyl)-tetraphosphatase, symmetrical, found in Shigella flexneri serotype 5b (strain 8401).